A 293-amino-acid polypeptide reads, in one-letter code: MFISEKVQKALEENKPIVALESTVIAHGLPYPENLKVAQEFEDIVYENGCVPATIGILKGKVIVGLSKEQLIELVDDNPIKVGTREISYAIAMKKSAATTVSSTAKIASLAGIKVFATGGIGGVHRGEWDVSQDIIELSKTNIIVVSAGCKSILDIKKTLEFLETFQVLTVGYKTEYFPIFYNRLSKEKIYKVENADEIANIFNEKNKLKLESAILVANPIPEDYVLDNNEIEGYIKTIEKEIAEKDIHGKEVTPYMLKRLVELSNGKTLESNIVLLKNNVELACKIAQSLKK.

The active-site Proton donor is the E21. Residues K81 and V101 each contribute to the substrate site. Position 130 (D130) interacts with Mn(2+). 132–134 lines the substrate pocket; sequence SQD. K151 functions as the Nucleophile in the catalytic mechanism.

It belongs to the pseudouridine-5'-phosphate glycosidase family. Homotrimer. It depends on Mn(2+) as a cofactor.

It catalyses the reaction D-ribose 5-phosphate + uracil = psi-UMP + H2O. Its function is as follows. Catalyzes the reversible cleavage of pseudouridine 5'-phosphate (PsiMP) to ribose 5-phosphate and uracil. Functions biologically in the cleavage direction, as part of a pseudouridine degradation pathway. This is Pseudouridine-5'-phosphate glycosidase from Thermosipho africanus (strain TCF52B).